Reading from the N-terminus, the 524-residue chain is MTPLDNEISRRRTFAIISHPDAGKTTLTEKLLWFGGAIQVAGEVRARKASRHATSDWMELEKQRGISVTSSVMQFPYRECMINLLDTPGHEDFSEDTYRTLTAVDSAVMVIDSVNGVEAQTIKLLNVCRMRDTPILTFINKLDREGKEPIDLLDEIESVLGIQCAPMTWPIGMGKRFRGVYHLYDDAIAFFDPQAEKGTAEIIQGLDNPRLDELIGTQADELRMDIELVRGASHAFDAEAYLSGKQSPVFFGSAVNNFGVQSLLDAVVDLSPPPIARPSVSREVLPNEPKFSGFVFKIQANMDPKHRDRIAFLRVCSGRFDRGMKVKQVASGKMLSINNAITFMARDRSTTDEAWPGDIIGIPNHGTIRLGETFTEGEDLRFTGIPSFAPEHFRLARIANPLKIKQLQKGLQQLAEEGATQLFRPLSGTDLILGAVGTLQFDVVASRLENEYGVQVIFEHYNCATARWIHGDAAELRQLSDRYSANVALDGADDPVYLAPNNVYLNMVKEKYPNLRFLEAREVA.

The region spanning 9-275 is the tr-type G domain; it reads SRRRTFAIIS…AVVDLSPPPI (267 aa). Residues 18–25, 86–90, and 140–143 contribute to the GTP site; these read SHPDAGKT, DTPGH, and NKLD.

This sequence belongs to the TRAFAC class translation factor GTPase superfamily. Classic translation factor GTPase family. PrfC subfamily.

Its subcellular location is the cytoplasm. Its function is as follows. Increases the formation of ribosomal termination complexes and stimulates activities of RF-1 and RF-2. It binds guanine nucleotides and has strong preference for UGA stop codons. It may interact directly with the ribosome. The stimulation of RF-1 and RF-2 is significantly reduced by GTP and GDP, but not by GMP. This Dechloromonas aromatica (strain RCB) protein is Peptide chain release factor 3.